A 315-amino-acid chain; its full sequence is 4-hydroxy-3-methylbut-2-enyl diphosphate reductase (315 aa).

C12 is a [4Fe-4S] cluster binding site. (2E)-4-hydroxy-3-methylbut-2-enyl diphosphate contacts are provided by H43 and H81. Dimethylallyl diphosphate-binding residues include H43 and H81. H43 and H81 together coordinate isopentenyl diphosphate. Residue C103 participates in [4Fe-4S] cluster binding. H131 lines the (2E)-4-hydroxy-3-methylbut-2-enyl diphosphate pocket. H131 is a binding site for dimethylallyl diphosphate. H131 provides a ligand contact to isopentenyl diphosphate. The Proton donor role is filled by E133. A (2E)-4-hydroxy-3-methylbut-2-enyl diphosphate-binding site is contributed by T170. Position 198 (C198) interacts with [4Fe-4S] cluster. Residues S226, N228, and S271 each coordinate (2E)-4-hydroxy-3-methylbut-2-enyl diphosphate. Dimethylallyl diphosphate-binding residues include S226, N228, and S271. Positions 226, 228, and 271 each coordinate isopentenyl diphosphate.

This sequence belongs to the IspH family. The cofactor is [4Fe-4S] cluster.

It catalyses the reaction isopentenyl diphosphate + 2 oxidized [2Fe-2S]-[ferredoxin] + H2O = (2E)-4-hydroxy-3-methylbut-2-enyl diphosphate + 2 reduced [2Fe-2S]-[ferredoxin] + 2 H(+). It carries out the reaction dimethylallyl diphosphate + 2 oxidized [2Fe-2S]-[ferredoxin] + H2O = (2E)-4-hydroxy-3-methylbut-2-enyl diphosphate + 2 reduced [2Fe-2S]-[ferredoxin] + 2 H(+). It participates in isoprenoid biosynthesis; dimethylallyl diphosphate biosynthesis; dimethylallyl diphosphate from (2E)-4-hydroxy-3-methylbutenyl diphosphate: step 1/1. The protein operates within isoprenoid biosynthesis; isopentenyl diphosphate biosynthesis via DXP pathway; isopentenyl diphosphate from 1-deoxy-D-xylulose 5-phosphate: step 6/6. Its function is as follows. Catalyzes the conversion of 1-hydroxy-2-methyl-2-(E)-butenyl 4-diphosphate (HMBPP) into a mixture of isopentenyl diphosphate (IPP) and dimethylallyl diphosphate (DMAPP). Acts in the terminal step of the DOXP/MEP pathway for isoprenoid precursor biosynthesis. The protein is 4-hydroxy-3-methylbut-2-enyl diphosphate reductase of Anoxybacillus flavithermus (strain DSM 21510 / WK1).